Reading from the N-terminus, the 321-residue chain is Gap junction delta-2 protein (321 aa).

The Cytoplasmic segment spans residues 1 to 19 (MGEWTILERLLEAAVQQHS). A helical membrane pass occupies residues 20 to 42 (TMIGRILLTVVVIFRILIVAIVG). Residues 43–75 (ETVYDDEQTMFVCNTLQPGCNQACYDRAFPISH) are Extracellular-facing. The helical transmembrane segment at 76–98 (IRYWVFQIIMVCTPSLCFITYSV) threads the bilayer. Topologically, residues 99-197 (HQSAKQRERR…KLRRQEGISR (99 aa)) are cytoplasmic. A disordered region spans residues 120-141 (PAESIGGPGGTGGGGSGGSKRE). A compositionally biased stretch (gly residues) spans 125 to 137 (GGPGGTGGGGSGG). The helical transmembrane segment at 198–220 (FYIIQVVFRNALEIGFLVGQYFL) threads the bilayer. Topologically, residues 221 to 252 (YGFSVPGLYECNRYPCIKEVECYVSRPTEKTV) are extracellular. A helical transmembrane segment spans residues 253-275 (FLVFMFAVSGICVVLNLAELNHL). Topologically, residues 276–321 (GWRKIKLAVRGAQAKRKSVYEIRNKDLPRVSVPNFGRTQSSDSAYV) are cytoplasmic.

Belongs to the connexin family. Delta-type subfamily. In terms of assembly, a connexon is composed of a hexamer of connexins. As to expression, highly expressed in neurons.

Its subcellular location is the cell membrane. The protein localises to the cell junction. It is found in the gap junction. One gap junction consists of a cluster of closely packed pairs of transmembrane channels, the connexons, through which materials of low MW diffuse from one cell to a neighboring cell. The protein is Gap junction delta-2 protein (Gjd2) of Rattus norvegicus (Rat).